The primary structure comprises 593 residues: MTGLLKRKFDQLDEDNSSVSSSSSSSSSSSGCQSLSCSPSSSVSRASDSEEEGPWDQMPLPDRDFCSPRSFTPLSILKRARRERPGRVAFDGITVFYFPRCQGFTSVPSRGGCTLGMAPRHSACRRFSLAEFAQEQARARHEKLRQRLKEEKLEMLQWKLSAAGAPKAEAGLPPAVDAIDDASVEEDLAVAVAGGRLEEVSFLQPYPARRRRALLRASGVRRIDREEKRELQALRQSREDCGCHCDRICDPETCSCSLAGIKCQMDHTAFPCGCCREGCENPMGRVEFNQARVQTHFIHTLTRLQLEQEAESFRELEAPAQGSPPSPGEEALVPTFPLAKPPMNNELGDNSCSSDMTDSSTASSSASGTSGAPDCPTHPGLPGPGFQPGVDDDSLARILSFSDSDFGGEEEEEEEGSVGNLDNLSCFHPADIFGTSDPGGLASWTHSYSGCSFTSGILDENANLDASCFLNGGLEGSREGSLPGTSVPPSMDAGQSSSVDLSLSSCDSFELLQALPDYSLGPHYTSQKVSDSLDNIEAPHFPLPGLSPPGDASSCFLESLMGFSEPAAEALDPFIDSQFEDTVPASLMEPVPV.

Disordered stretches follow at residues 1–66 (MTGL…RDFC), 313–392 (FREL…GVDD), and 478–497 (REGS…GQSS). Low complexity-rich tracts occupy residues 17–46 (SSVS…VSRA) and 351–372 (SCSS…TSGA).

This sequence belongs to the AXUD1 family.

It localises to the nucleus. Functionally, binds to the consensus sequence 5'-AGAGTG-3' and has transcriptional activator activity. May have a tumor-suppressor function. May play a role in apoptosis. The polypeptide is Cysteine/serine-rich nuclear protein 1 (CSRNP1) (Pongo abelii (Sumatran orangutan)).